A 214-amino-acid polypeptide reads, in one-letter code: Intermembrane phospholipid transport system binding protein MlaC (214 aa).

The N-terminal stretch at 1–28 (MNLIQLKKWFTILTFVLTAFLVTRTAIA) is a signal peptide.

It belongs to the MlaC/ttg2D family.

It is found in the periplasm. Involved in a phospholipid transport pathway that maintains lipid asymmetry in the outer membrane by retrograde trafficking of phospholipids from the outer membrane to the inner membrane. May transfer phospholipid across the periplasmic space and deliver it to the MlaFEDB complex at the inner membrane. The sequence is that of Intermembrane phospholipid transport system binding protein MlaC from Haemophilus influenzae (strain ATCC 51907 / DSM 11121 / KW20 / Rd).